The sequence spans 421 residues: Trimethyllysine dioxygenase, mitochondrial (421 aa).

The N-terminal 15 residues, 1–15, are a transit peptide targeting the mitochondrion; it reads MWCHRLSHLQSRLQD. Lysine 236 carries the N6-acetyllysine modification. Histidine 242, aspartate 244, and histidine 389 together coordinate Fe cation.

It belongs to the gamma-BBH/TMLD family. In terms of assembly, homodimer. Fe(2+) serves as cofactor. Requires L-ascorbate as cofactor.

It localises to the mitochondrion matrix. It carries out the reaction N(6),N(6),N(6)-trimethyl-L-lysine + 2-oxoglutarate + O2 = (3S)-3-hydroxy-N(6),N(6),N(6)-trimethyl-L-lysine + succinate + CO2. The protein operates within amine and polyamine biosynthesis; carnitine biosynthesis. In terms of biological role, converts trimethyllysine (TML) into hydroxytrimethyllysine (HTML). This chain is Trimethyllysine dioxygenase, mitochondrial (TMLHE), found in Bos taurus (Bovine).